The chain runs to 148 residues: Large ribosomal subunit protein bL9 (148 aa).

This sequence belongs to the bacterial ribosomal protein bL9 family.

Its function is as follows. Binds to the 23S rRNA. The sequence is that of Large ribosomal subunit protein bL9 from Dechloromonas aromatica (strain RCB).